A 160-amino-acid chain; its full sequence is Cytochrome b6-f complex subunit 4 (160 aa).

3 consecutive transmembrane segments (helical) span residues 36 to 56 (LLYI…GLAV), 95 to 115 (LLGI…PFIE), and 128 to 148 (IAMS…IGAC).

The protein belongs to the cytochrome b family. PetD subfamily. In terms of assembly, the 4 large subunits of the cytochrome b6-f complex are cytochrome b6, subunit IV (17 kDa polypeptide, PetD), cytochrome f and the Rieske protein, while the 4 small subunits are PetG, PetL, PetM and PetN. The complex functions as a dimer.

The protein localises to the cellular thylakoid membrane. Component of the cytochrome b6-f complex, which mediates electron transfer between photosystem II (PSII) and photosystem I (PSI), cyclic electron flow around PSI, and state transitions. The sequence is that of Cytochrome b6-f complex subunit 4 from Prochlorococcus marinus (strain MIT 9312).